The chain runs to 352 residues: 4-hydroxy-3-methylbut-2-en-1-yl diphosphate synthase (flavodoxin) (352 aa).

Residues cysteine 262, cysteine 265, cysteine 297, and glutamate 304 each contribute to the [4Fe-4S] cluster site.

It belongs to the IspG family. [4Fe-4S] cluster is required as a cofactor.

It catalyses the reaction (2E)-4-hydroxy-3-methylbut-2-enyl diphosphate + oxidized [flavodoxin] + H2O + 2 H(+) = 2-C-methyl-D-erythritol 2,4-cyclic diphosphate + reduced [flavodoxin]. The protein operates within isoprenoid biosynthesis; isopentenyl diphosphate biosynthesis via DXP pathway; isopentenyl diphosphate from 1-deoxy-D-xylulose 5-phosphate: step 5/6. Converts 2C-methyl-D-erythritol 2,4-cyclodiphosphate (ME-2,4cPP) into 1-hydroxy-2-methyl-2-(E)-butenyl 4-diphosphate. This chain is 4-hydroxy-3-methylbut-2-en-1-yl diphosphate synthase (flavodoxin), found in Campylobacter concisus (strain 13826).